The following is a 300-amino-acid chain: MSYRELVVELAREHAEALSDALLELGALSVSVEDADADTPDEQPLFGEPGLVPDRTAWQRSRVIALLSPDHEPAVLLAAAVNDIGVTETPKFDVREVEEQDWVRLTQSQFEPIPIGERIWVVPSWHDAPDPDALILELDPGLAFGTGSHPTTRLCMEWLEQSVKPGQSVLDYGCGSGILAILARKCGANPVVGIDIDPQAVESARQNSERNHAEVTYGLPDACPAGEFDIVVANILSNPLKLMASMLASKVKPGGRIALSGVLARQADEVAAVYARYVDISVWREHEGWVCLAGTRRESH.

Positions 152, 173, 195, and 234 each coordinate S-adenosyl-L-methionine.

Belongs to the methyltransferase superfamily. PrmA family.

Its subcellular location is the cytoplasm. The enzyme catalyses L-lysyl-[protein] + 3 S-adenosyl-L-methionine = N(6),N(6),N(6)-trimethyl-L-lysyl-[protein] + 3 S-adenosyl-L-homocysteine + 3 H(+). In terms of biological role, methylates ribosomal protein L11. This chain is Ribosomal protein L11 methyltransferase, found in Burkholderia ambifaria (strain ATCC BAA-244 / DSM 16087 / CCUG 44356 / LMG 19182 / AMMD) (Burkholderia cepacia (strain AMMD)).